The primary structure comprises 362 residues: Transcription factor Sox-7 (362 aa).

A disordered region spans residues 21-41 (EDLSDGLSPHRSPREKGSETR). A compositionally biased stretch (basic and acidic residues) spans 32–41 (SPREKGSETR). Residues 42-110 (IRRPMNAFMV…QHMQDYPNYK (69 aa)) constitute a DNA-binding region (HMG box). The Sox C-terminal domain maps to 245–362 (QTGSSMIPPV…ATYYNSYSVS (118 aa)).

As to expression, expressed in the embryonic pronephric sinus as well as posterior cardinal veins.

The protein resides in the nucleus. In terms of biological role, transcription factor. Binds to the DNA sequence 5'-AACAAT-3'. Acts downstream of vegt and upstream of nodal signaling to promote endodermal and mesodermal differentiation by promoting vegt-induced expression of both endodermal genes (including endodermin) and mesodermal genes (including snai1/snail and snai2/slug). Induces expression of multiple nodal genes (including nodal, nodal2, nodal4, nodal5 and nodal6) and binds directly to sites within the promoter of the nodal5 gene. The endodermal and mesodermal specification pathways then interact to initiate cardiogenesis. Acts partially redundantly with sox18 during cardiogenesis. Also acts as an antagonist of beta-catenin signaling. Regulates (possibly indirectly) development of the pronephros, the functional larval kidney. The polypeptide is Transcription factor Sox-7 (Xenopus tropicalis (Western clawed frog)).